The chain runs to 400 residues: Tryptophan synthase beta chain (400 aa).

K90 bears the N6-(pyridoxal phosphate)lysine mark.

Belongs to the TrpB family. In terms of assembly, tetramer of two alpha and two beta chains. Requires pyridoxal 5'-phosphate as cofactor.

The enzyme catalyses (1S,2R)-1-C-(indol-3-yl)glycerol 3-phosphate + L-serine = D-glyceraldehyde 3-phosphate + L-tryptophan + H2O. Its pathway is amino-acid biosynthesis; L-tryptophan biosynthesis; L-tryptophan from chorismate: step 5/5. The beta subunit is responsible for the synthesis of L-tryptophan from indole and L-serine. The sequence is that of Tryptophan synthase beta chain (trpB) from Bacillus subtilis (strain 168).